Consider the following 406-residue polypeptide: Cysteine desulfurase (406 aa).

An N6-(pyridoxal phosphate)lysine modification is found at Lys226. Cys364 (cysteine persulfide intermediate) is an active-site residue.

This sequence belongs to the class-V pyridoxal-phosphate-dependent aminotransferase family. Csd subfamily. In terms of assembly, homodimer. Interacts with SufE and the SufBCD complex composed of SufB, SufC and SufD. The interaction with SufE is required to mediate the direct transfer of the sulfur atom from the S-sulfanylcysteine. Pyridoxal 5'-phosphate is required as a cofactor.

Its subcellular location is the cytoplasm. The catalysed reaction is (sulfur carrier)-H + L-cysteine = (sulfur carrier)-SH + L-alanine. The enzyme catalyses L-selenocysteine + AH2 = hydrogenselenide + L-alanine + A + H(+). It functions in the pathway cofactor biosynthesis; iron-sulfur cluster biosynthesis. Functionally, cysteine desulfurases mobilize the sulfur from L-cysteine to yield L-alanine, an essential step in sulfur metabolism for biosynthesis of a variety of sulfur-containing biomolecules. Component of the suf operon, which is activated and required under specific conditions such as oxidative stress and iron limitation. Acts as a potent selenocysteine lyase in vitro, that mobilizes selenium from L-selenocysteine. Selenocysteine lyase activity is however unsure in vivo. This is Cysteine desulfurase from Enterobacter sp. (strain 638).